The sequence spans 1072 residues: Carbamoyl phosphate synthase large chain (1072 aa).

Residues 1-401 (MPKRLDINTI…SLLKAVRSLE (401 aa)) are carboxyphosphate synthetic domain. Positions 129, 169, 175, 176, 208, 210, 215, 241, 242, 243, 284, and 298 each coordinate ATP. The ATP-grasp 1 domain occupies 133–327 (RTLMQDLNEP…IAKLAAKIAV (195 aa)). 3 residues coordinate Mg(2+): glutamine 284, glutamate 298, and asparagine 300. Mn(2+) is bound by residues glutamine 284, glutamate 298, and asparagine 300. An oligomerization domain region spans residues 402-546 (LGIYHLELDH…YSTYADENES (145 aa)). The interval 547-929 (IVTDRKSVVV…ALYKGLVASG (383 aa)) is carbamoyl phosphate synthetic domain. Positions 671–861 (EAALTKLGIP…MANVATKVIL (191 aa)) constitute an ATP-grasp 2 domain. Arginine 707, arginine 746, glutamate 752, glycine 777, valine 778, histidine 779, serine 780, glutamine 820, and glutamate 832 together coordinate ATP. Mg(2+)-binding residues include glutamine 820, glutamate 832, and asparagine 834. Positions 820, 832, and 834 each coordinate Mn(2+). The region spanning 930-1072 (INIPTHGSVI…QTKRHEVVHA (143 aa)) is the MGS-like domain. The tract at residues 930–1072 (INIPTHGSVI…QTKRHEVVHA (143 aa)) is allosteric domain.

Belongs to the CarB family. As to quaternary structure, composed of two chains; the small (or glutamine) chain promotes the hydrolysis of glutamine to ammonia, which is used by the large (or ammonia) chain to synthesize carbamoyl phosphate. Tetramer of heterodimers (alpha,beta)4. The cofactor is Mg(2+). Mn(2+) serves as cofactor.

The catalysed reaction is hydrogencarbonate + L-glutamine + 2 ATP + H2O = carbamoyl phosphate + L-glutamate + 2 ADP + phosphate + 2 H(+). It catalyses the reaction hydrogencarbonate + NH4(+) + 2 ATP = carbamoyl phosphate + 2 ADP + phosphate + 2 H(+). It participates in amino-acid biosynthesis; L-arginine biosynthesis; carbamoyl phosphate from bicarbonate: step 1/1. It functions in the pathway pyrimidine metabolism; UMP biosynthesis via de novo pathway; (S)-dihydroorotate from bicarbonate: step 1/3. Large subunit of the glutamine-dependent carbamoyl phosphate synthetase (CPSase). CPSase catalyzes the formation of carbamoyl phosphate from the ammonia moiety of glutamine, carbonate, and phosphate donated by ATP, constituting the first step of 2 biosynthetic pathways, one leading to arginine and/or urea and the other to pyrimidine nucleotides. The large subunit (synthetase) binds the substrates ammonia (free or transferred from glutamine from the small subunit), hydrogencarbonate and ATP and carries out an ATP-coupled ligase reaction, activating hydrogencarbonate by forming carboxy phosphate which reacts with ammonia to form carbamoyl phosphate. In Bacillus cereus (strain AH187), this protein is Carbamoyl phosphate synthase large chain.